The sequence spans 1021 residues: DNA-directed RNA polymerase 2B, chloroplastic/mitochondrial (1021 aa).

The interval 315–337 (KKQKAEKDKQKEDGEHVTQEQEK) is disordered. Catalysis depends on residues aspartate 722, lysine 797, and aspartate 954.

It belongs to the phage and mitochondrial RNA polymerase family.

The protein resides in the plastid. It is found in the chloroplast. The protein localises to the mitochondrion. The enzyme catalyses RNA(n) + a ribonucleoside 5'-triphosphate = RNA(n+1) + diphosphate. In terms of biological role, DNA-dependent RNA polymerase catalyzes the transcription of DNA into RNA using the four ribonucleoside triphosphates as substrates. This Nicotiana tabacum (Common tobacco) protein is DNA-directed RNA polymerase 2B, chloroplastic/mitochondrial (RPOT2-TOM).